A 219-amino-acid polypeptide reads, in one-letter code: Ribose-5-phosphate isomerase A (219 aa).

Substrate is bound by residues 28–31 (TGST), 81–84 (DGAD), and 94–97 (KGGG). Residue E103 is the Proton acceptor of the active site. Residue K121 coordinates substrate.

Belongs to the ribose 5-phosphate isomerase family. Homodimer.

The enzyme catalyses aldehydo-D-ribose 5-phosphate = D-ribulose 5-phosphate. The protein operates within carbohydrate degradation; pentose phosphate pathway; D-ribose 5-phosphate from D-ribulose 5-phosphate (non-oxidative stage): step 1/1. In terms of biological role, catalyzes the reversible conversion of ribose-5-phosphate to ribulose 5-phosphate. The protein is Ribose-5-phosphate isomerase A of Methylibium petroleiphilum (strain ATCC BAA-1232 / LMG 22953 / PM1).